The chain runs to 267 residues: Strigolactone esterase RMS3 (267 aa).

Ser-96 acts as the Nucleophile in catalysis. Active-site residues include Asp-218 and His-247.

The protein belongs to the AB hydrolase superfamily.

Its subcellular location is the cytoplasm. The protein resides in the nucleus. Functionally, involved in strigolactone signaling pathway. Functions downstream of strigolactone synthesis, as a component of hormone signaling and as an enzyme that participates in the conversion of strigolactones to the bioactive form. Binds and hydrolyzes the synthetic strigolactone analog GR24 and its enantiomers in vitro. Forms a stable covalent complex with the D-ring of strigolactone, which is essential for hormone bioactivity. The D-ring is attached to His-247 of the catalytic triad. The hydrolysis of strigolactone into a covalently linked intermediate molecule is required to trigger strigolactone signaling. This mechanism defines RMS3 as a non-canonical hormone receptor with dual functions to generate and sense the active form of strigolactone. Strigolactones are hormones that inhibit tillering and shoot branching through the MAX-dependent pathway, contribute to the regulation of shoot architectural response to phosphate-limiting conditions and function as rhizosphere signal that stimulates hyphal branching of arbuscular mycorrhizal fungi and trigger seed germination of root parasitic weeds. The chain is Strigolactone esterase RMS3 from Pisum sativum (Garden pea).